The following is a 1379-amino-acid chain: DNA-directed RNA polymerase subunit beta (1379 aa).

It belongs to the RNA polymerase beta chain family. In terms of assembly, the RNAP catalytic core consists of 2 alpha, 1 beta, 1 beta' and 1 omega subunit. When a sigma factor is associated with the core the holoenzyme is formed, which can initiate transcription.

It catalyses the reaction RNA(n) + a ribonucleoside 5'-triphosphate = RNA(n+1) + diphosphate. In terms of biological role, DNA-dependent RNA polymerase catalyzes the transcription of DNA into RNA using the four ribonucleoside triphosphates as substrates. This is DNA-directed RNA polymerase subunit beta from Allorhizobium ampelinum (strain ATCC BAA-846 / DSM 112012 / S4) (Agrobacterium vitis (strain S4)).